The primary structure comprises 316 residues: Phospho-N-acetylmuramoyl-pentapeptide-transferase (316 aa).

The next 10 helical transmembrane spans lie at 5–25, 52–72, 76–96, 116–136, 145–165, 172–192, 195–212, 221–241, 244–264, and 296–316; these read IIFATLLSFTVAIISGRFFIP, TMGGIIFVVATFLTSLIFSPW, LFILLAGFLGYGLIGFADDFL, FLLAIVISWFIKSNVGTEIIV, LANFYIPFAVFIIVGTVNSVN, GLAAGVSTIVMAFFAMIALFL, VTYGVFSASLTGGLLGFL, VFMGDTGSLAIGGAVATVALL, LPLILPVLGIIYVAEAISVIL, and VVYSFWLVTLIALFVSFYSLS.

The protein belongs to the glycosyltransferase 4 family. MraY subfamily. The cofactor is Mg(2+).

Its subcellular location is the cell membrane. The enzyme catalyses UDP-N-acetyl-alpha-D-muramoyl-L-alanyl-gamma-D-glutamyl-meso-2,6-diaminopimeloyl-D-alanyl-D-alanine + di-trans,octa-cis-undecaprenyl phosphate = di-trans,octa-cis-undecaprenyl diphospho-N-acetyl-alpha-D-muramoyl-L-alanyl-D-glutamyl-meso-2,6-diaminopimeloyl-D-alanyl-D-alanine + UMP. It participates in cell wall biogenesis; peptidoglycan biosynthesis. In terms of biological role, catalyzes the initial step of the lipid cycle reactions in the biosynthesis of the cell wall peptidoglycan: transfers peptidoglycan precursor phospho-MurNAc-pentapeptide from UDP-MurNAc-pentapeptide onto the lipid carrier undecaprenyl phosphate, yielding undecaprenyl-pyrophosphoryl-MurNAc-pentapeptide, known as lipid I. This chain is Phospho-N-acetylmuramoyl-pentapeptide-transferase, found in Caldanaerobacter subterraneus subsp. tengcongensis (strain DSM 15242 / JCM 11007 / NBRC 100824 / MB4) (Thermoanaerobacter tengcongensis).